Here is a 367-residue protein sequence, read N- to C-terminus: Uracil nucleotide/cysteinyl leukotriene receptor (367 aa).

The tract at residues 1-28 is disordered; sequence MSKRSWWAGSRKPPREMLKLSGSDSSQS. Residues 1-64 are Extracellular-facing; the sequence is MSKRSWWAGS…TPLENMLFAS (64 aa). An N-linked (GlcNAc...) asparagine glycan is attached at Asn42. A helical membrane pass occupies residues 65–85; it reads FYLLDFILALVGNTLALWLFI. Residues 86–92 are Cytoplasmic-facing; sequence RDHKSGT. Residues 93-113 form a helical membrane-spanning segment; sequence PANVFLMHLAVADLSCVLVLP. The Extracellular portion of the chain corresponds to 114–133; the sequence is TRLVYHFSGNHWPFGEIACR. A disulfide bond links Cys132 and Cys209. Residues 134–154 traverse the membrane as a helical segment; it reads LTGFLFYLNMYASIYFLTCIS. The Cytoplasmic portion of the chain corresponds to 155-175; it reads ADRFLAIVHPVKSLKLRRPLY. A helical transmembrane segment spans residues 176–196; the sequence is AHLACAFLWVVVAVAMAPLLV. The Extracellular segment spans residues 197–223; sequence SPQTVQTNHTVVCLQLYREKASHHALV. Asn204 carries an N-linked (GlcNAc...) asparagine glycan. The helical transmembrane segment at 224-244 threads the bilayer; that stretch reads SLAVAFTFPFITTVTCYLLII. At 245–260 the chain is on the cytoplasmic side; it reads RSLRQGLRVEKRLKTK. A helical transmembrane segment spans residues 261–281; sequence AVRMIAIVLAIFLVCFVPYHV. The N-linked (GlcNAc...) asparagine glycan is linked to Asn282. Residues 282–308 lie on the Extracellular side of the membrane; it reads NRSVYVLHYRSHGASCATQRILALANR. The chain crosses the membrane as a helical span at residues 309–329; the sequence is ITSCLTSLNGALDPIMYFFVA. Topologically, residues 330-367 are cytoplasmic; that stretch reads EKFRHALCNLLCGKRLKGPPPSFEGKTNESSLSAKSEL.

Belongs to the G-protein coupled receptor 1 family. As to expression, expressed in brain, kidney, heart and umbilical vein endothelial cells. Highest level in brain.

It is found in the cell membrane. In terms of biological role, dual specificity receptor for uracil nucleotides and cysteinyl leukotrienes (CysLTs). Signals through G(i) and inhibition of adenylyl cyclase. May mediate brain damage by nucleotides and CysLTs following ischemia. The protein is Uracil nucleotide/cysteinyl leukotriene receptor (GPR17) of Homo sapiens (Human).